The chain runs to 92 residues: UPF0237 protein MM_0082 (92 aa).

Residues 7 to 81 (IITVIGSDRV…KSLGVEVKVQ (75 aa)) enclose the ACT domain.

It belongs to the UPF0237 family.

The chain is UPF0237 protein MM_0082 from Methanosarcina mazei (strain ATCC BAA-159 / DSM 3647 / Goe1 / Go1 / JCM 11833 / OCM 88) (Methanosarcina frisia).